The following is a 397-amino-acid chain: tRNA(Ile)-lysidine synthase (397 aa).

Residue 44–49 participates in ATP binding; it reads SGGADS.

It belongs to the tRNA(Ile)-lysidine synthase family.

It is found in the cytoplasm. It carries out the reaction cytidine(34) in tRNA(Ile2) + L-lysine + ATP = lysidine(34) in tRNA(Ile2) + AMP + diphosphate + H(+). Ligates lysine onto the cytidine present at position 34 of the AUA codon-specific tRNA(Ile) that contains the anticodon CAU, in an ATP-dependent manner. Cytidine is converted to lysidine, thus changing the amino acid specificity of the tRNA from methionine to isoleucine. The protein is tRNA(Ile)-lysidine synthase of Rhodopirellula baltica (strain DSM 10527 / NCIMB 13988 / SH1).